Here is a 245-residue protein sequence, read N- to C-terminus: Thiopurine S-methyltransferase (245 aa).

29-40 provides a ligand contact to S-adenosyl-L-methionine; the sequence is WQEKWVNHKTGF. Residue phenylalanine 40 participates in substrate binding. N6-acetyllysine is present on lysine 58. Residues leucine 69, glutamate 90, and arginine 152 each coordinate S-adenosyl-L-methionine.

It belongs to the class I-like SAM-binding methyltransferase superfamily. TPMT family. In terms of assembly, monomer.

The protein resides in the cytoplasm. It carries out the reaction S-adenosyl-L-methionine + a thiopurine = S-adenosyl-L-homocysteine + a thiopurine S-methylether.. The chain is Thiopurine S-methyltransferase (TPMT) from Bos taurus (Bovine).